The sequence spans 794 residues: Protocadherin beta-6 (794 aa).

An N-terminal signal peptide occupies residues 1–27 (MMQTKVQNKKRQVAFFILLMLWGEVGS). Over 28–688 (ESIQYSVLEE…AQADSLTVYL (661 aa)) the chain is Extracellular. Cadherin domains follow at residues 34 to 132 (VLEE…APEF), 137 to 241 (MLLK…VPEF), 246 to 345 (YEAQ…APEL), 350 to 449 (FISL…APAF), and 454 to 559 (YTLF…SPFV). Asn-46 carries N-linked (GlcNAc...) asparagine glycosylation. An intrachain disulfide couples Cys-95 to Cys-101. N-linked (GlcNAc...) asparagine glycosylation is present at Asn-183. N-linked (GlcNAc...) asparagine glycosylation is present at Asn-416. Residue Asn-565 is glycosylated (N-linked (GlcNAc...) asparagine). The Cadherin 6 domain occupies 566–669 (GSAPCTELVP…LVDGFSQPYL (104 aa)). The chain crosses the membrane as a helical span at residues 689–709 (VVALASVSSLFLFSVLLFVAV). Topologically, residues 710–794 (RLCRRSRAAS…PTSRNSFPFS (85 aa)) are cytoplasmic. The tract at residues 773–794 (PPQGTEREMEETPTSRNSFPFS) is disordered. The span at 784–794 (TPTSRNSFPFS) shows a compositional bias: polar residues.

Forms homodimers in trans (molecules expressed by two different cells). Forms promiscuous heterodimers in cis (at the plasma membrane of the same cell) with other protocadherins.

It localises to the cell membrane. Functionally, calcium-dependent cell-adhesion protein involved in cells self-recognition and non-self discrimination. Thereby, it is involved in the establishment and maintenance of specific neuronal connections in the brain. This chain is Protocadherin beta-6, found in Homo sapiens (Human).